Consider the following 351-residue polypeptide: DNA-directed RNA polymerase subunit alpha (351 aa).

The tract at residues 1–245 is alpha N-terminal domain (alpha-NTD); the sequence is MPRRNLLKGF…EHFTVFVNFD (245 aa). Residues 261–351 form an alpha C-terminal domain (alpha-CTD) region; that stretch reads AVLELLNTKI…MRQKEEIDEA (91 aa).

It belongs to the RNA polymerase alpha chain family. Homodimer. The RNAP catalytic core consists of 2 alpha, 1 beta, 1 beta' and 1 omega subunit. When a sigma factor is associated with the core the holoenzyme is formed, which can initiate transcription.

The enzyme catalyses RNA(n) + a ribonucleoside 5'-triphosphate = RNA(n+1) + diphosphate. Its function is as follows. DNA-dependent RNA polymerase catalyzes the transcription of DNA into RNA using the four ribonucleoside triphosphates as substrates. This Treponema pallidum (strain Nichols) protein is DNA-directed RNA polymerase subunit alpha.